The sequence spans 984 residues: Pre-mRNA-splicing factor cwf10 (984 aa).

A disordered region spans residues 1–28 (MMEEDLYDEFGNYIGPENEEDEEELFPQ). Residues 139-402 (DDVRSFIVAG…HTLTISDEAE (264 aa)) enclose the tr-type G domain. The tract at residues 148 to 155 (GHLHHGKS) is G1. Residue 148 to 155 (GHLHHGKS) coordinates GTP. The G2 stretch occupies residues 190–194 (VMSIK). A G3 region spans residues 216-219 (DTPG). GTP-binding positions include 216–220 (DTPGH) and 270–273 (NKVD). A G4 region spans residues 270–273 (NKVD). The interval 371–373 (QSL) is G5.

Belongs to the TRAFAC class translation factor GTPase superfamily. Classic translation factor GTPase family. EF-G/EF-2 subfamily. In terms of assembly, belongs to the 40S cdc5-associated complex (or cwf complex), a spliceosome sub-complex reminiscent of a late-stage spliceosome composed of the U2, U5 and U6 snRNAs and at least brr2, cdc5, cwf2/prp3, cwf3/syf1, cwf4/syf3, cwf5/ecm2, spp42/cwf6, cwf7/spf27, cwf8, cwf9, cwf10, cwf11, cwf12, prp45/cwf13, cwf14, cwf15, cwf16, cwf17, cwf18, cwf19, cwf20, cwf21, cwf22, cwf23, cwf24, cwf25, cwf26, cyp7/cwf27, cwf28, cwf29/ist3, lea1, msl1, prp5/cwf1, prp10, prp12/sap130, prp17, prp22, sap61, sap62, sap114, sap145, slu7, smb1, smd1, smd3, smf1, smg1 and syf2.

It localises to the cytoplasm. Its subcellular location is the nucleus. Component of the U5 snRNP complex required for pre-mRNA splicing. Binds GTP. In Schizosaccharomyces pombe (strain 972 / ATCC 24843) (Fission yeast), this protein is Pre-mRNA-splicing factor cwf10 (cwf10).